The chain runs to 51 residues: Large ribosomal subunit protein eL39 (51 aa).

Belongs to the eukaryotic ribosomal protein eL39 family.

This is Large ribosomal subunit protein eL39 from Saccharolobus islandicus (strain Y.N.15.51 / Yellowstone #2) (Sulfolobus islandicus).